Consider the following 256-residue polypeptide: uncharacterized protein (256 aa).

Residues 1–23 (MIPPCENAPHIIYHESQRGTRDR) form a disordered region. The span at 12-23 (IYHESQRGTRDR) shows a compositional bias: basic and acidic residues.

This is an uncharacterized protein from Homo sapiens (Human).